The following is a 388-amino-acid chain: Succinate--CoA ligase [ADP-forming] subunit beta (388 aa).

In terms of domain architecture, ATP-grasp spans 9–244 (KALFAEYGLP…PSQDDAREAH (236 aa)). ATP-binding positions include K46, 53-55 (GRG), E99, T102, and E107. Mg(2+) contacts are provided by N199 and D213. Substrate is bound by residues N264 and 321–323 (GIV).

The protein belongs to the succinate/malate CoA ligase beta subunit family. In terms of assembly, heterotetramer of two alpha and two beta subunits. It depends on Mg(2+) as a cofactor.

The enzyme catalyses succinate + ATP + CoA = succinyl-CoA + ADP + phosphate. It carries out the reaction GTP + succinate + CoA = succinyl-CoA + GDP + phosphate. Its pathway is carbohydrate metabolism; tricarboxylic acid cycle; succinate from succinyl-CoA (ligase route): step 1/1. Functionally, succinyl-CoA synthetase functions in the citric acid cycle (TCA), coupling the hydrolysis of succinyl-CoA to the synthesis of either ATP or GTP and thus represents the only step of substrate-level phosphorylation in the TCA. The beta subunit provides nucleotide specificity of the enzyme and binds the substrate succinate, while the binding sites for coenzyme A and phosphate are found in the alpha subunit. This chain is Succinate--CoA ligase [ADP-forming] subunit beta, found in Shewanella loihica (strain ATCC BAA-1088 / PV-4).